The primary structure comprises 210 residues: Fibrillarin-like rRNA/tRNA 2'-O-methyltransferase (210 aa).

A disordered region spans residues 1–34 (MTLPSGVERHDFGGETSLATQGQPVYGERTDGDW). Residues 71–72 (TT), 87–88 (EF), 112–113 (DA), and 132–135 (DVAT) each bind S-adenosyl-L-methionine.

Belongs to the methyltransferase superfamily. Fibrillarin family. As to quaternary structure, interacts with nop5. Component of box C/D small ribonucleoprotein (sRNP) particles that contain rpl7ae, FlpA and nop5, plus a guide RNA.

Involved in pre-rRNA and tRNA processing. Utilizes the methyl donor S-adenosyl-L-methionine to catalyze the site-specific 2'-hydroxyl methylation of ribose moieties in rRNA and tRNA. Site specificity is provided by a guide RNA that base pairs with the substrate. Methylation occurs at a characteristic distance from the sequence involved in base pairing with the guide RNA. The sequence is that of Fibrillarin-like rRNA/tRNA 2'-O-methyltransferase from Haloarcula marismortui (strain ATCC 43049 / DSM 3752 / JCM 8966 / VKM B-1809) (Halobacterium marismortui).